The chain runs to 336 residues: Dihydrolipoyl dehydrogenase (336 aa).

FAD contacts are provided by residues Glu34–Cys42, Lys51, and Gly115. A disulfide bond links Cys42 and Cys47. NAD(+) contacts are provided by residues Gly180 to Ile184, Glu203, Val237, and Ser264 to Thr267. FAD contacts are provided by Asp304 and Ala312.

It belongs to the class-I pyridine nucleotide-disulfide oxidoreductase family. As to quaternary structure, homodimer. Requires FAD as cofactor.

It localises to the cytoplasm. The enzyme catalyses N(6)-[(R)-dihydrolipoyl]-L-lysyl-[protein] + NAD(+) = N(6)-[(R)-lipoyl]-L-lysyl-[protein] + NADH + H(+). Its function is as follows. Lipoamide dehydrogenase is a component of the alpha-ketoacid dehydrogenase complexes. The chain is Dihydrolipoyl dehydrogenase (pdhD) from Acholeplasma laidlawii.